The chain runs to 475 residues: Dihydrolipoyl dehydrogenase (475 aa).

FAD contacts are provided by residues 36-45 (ERYNTLGGVC), Lys-54, and Gly-117. Cys-45 and Cys-50 are oxidised to a cystine. NAD(+)-binding positions include 182–186 (GGGII), Glu-205, Val-238, and 270–273 (AIGR). Residues Asp-313 and Ala-321 each contribute to the FAD site. The active-site Proton acceptor is His-445.

It belongs to the class-I pyridine nucleotide-disulfide oxidoreductase family. Requires FAD as cofactor.

It is found in the cytoplasm. It carries out the reaction N(6)-[(R)-dihydrolipoyl]-L-lysyl-[protein] + NAD(+) = N(6)-[(R)-lipoyl]-L-lysyl-[protein] + NADH + H(+). In terms of biological role, the branched-chain alpha-keto dehydrogenase complex catalyzes the overall conversion of alpha-keto acids to acyl-CoA and CO(2). It contains multiple copies of 3 enzymatic components: branched-chain alpha-keto acid decarboxylase (E1), lipoamide acyltransferase (E2) and lipoamide dehydrogenase (E3). This Vibrio cholerae serotype O1 (strain ATCC 39315 / El Tor Inaba N16961) protein is Dihydrolipoyl dehydrogenase (lpd).